A 40-amino-acid chain; its full sequence is Photosystem II reaction center protein J (40 aa).

The chain crosses the membrane as a helical span at residues 8 to 28 (IPLWLIGTVTGIPVIGSMGIF).

It belongs to the PsbJ family. PSII is composed of 1 copy each of membrane proteins PsbA, PsbB, PsbC, PsbD, PsbE, PsbF, PsbH, PsbI, PsbJ, PsbK, PsbL, PsbM, PsbT, PsbX, PsbY, PsbZ, Psb30/Ycf12, at least 3 peripheral proteins of the oxygen-evolving complex and a large number of cofactors. It forms dimeric complexes.

It is found in the plastid. It localises to the chloroplast thylakoid membrane. One of the components of the core complex of photosystem II (PSII). PSII is a light-driven water:plastoquinone oxidoreductase that uses light energy to abstract electrons from H(2)O, generating O(2) and a proton gradient subsequently used for ATP formation. It consists of a core antenna complex that captures photons, and an electron transfer chain that converts photonic excitation into a charge separation. This is Photosystem II reaction center protein J from Illicium oligandrum (Star anise).